The chain runs to 534 residues: Serine/threonine-protein kinase ppk15 (534 aa).

The segment at 1-40 (MDSDSPILPLSNNPPAARTHDHSQRNNHARHVSSSGTTLF) is disordered. 3 positions are modified to phosphoserine: Ser33, Ser56, and Ser60. The interval 85–104 (FSSEQNPRRPLTKPSEGVHN) is disordered. The Protein kinase domain maps to 130 to 458 (YLILDTLGHG…PDQAKNHPFI (329 aa)). ATP contacts are provided by residues 136-144 (LGHGTFGQV) and Lys159. Catalysis depends on Asp257, which acts as the Proton acceptor. The residue at position 291 (Tyr291) is a Phosphotyrosine.

Belongs to the protein kinase superfamily. Ser/Thr protein kinase family.

Its subcellular location is the cytoplasm. It is found in the cytoskeleton. It localises to the microtubule organizing center. The protein resides in the spindle pole body. The enzyme catalyses L-seryl-[protein] + ATP = O-phospho-L-seryl-[protein] + ADP + H(+). It carries out the reaction L-threonyl-[protein] + ATP = O-phospho-L-threonyl-[protein] + ADP + H(+). The sequence is that of Serine/threonine-protein kinase ppk15 (ppk15) from Schizosaccharomyces pombe (strain 972 / ATCC 24843) (Fission yeast).